Reading from the N-terminus, the 383-residue chain is MVQLLHSIKAHNDKVWSVSVHPTLPIIATASTDKSTKLYKLSARQKFPLVAKLEDTHKRSIRSVAFKPPLGGADTPKSDFLDLPALAAGSFDSTISVWGIDEPDVEYDIEEVIANQKEILTSPNNEWNLMAIIEGHENEVKAVDWNFQGQYLASCSRDKTVWIWETDPETLEEFECVAVLNDHSQDVKNVSWHPSMNILASSSYDDTIRIYQQDIAGDEWSCVGILNGHEGTVWCSKFESLKSPIADSSVLRLVSASDDLSVRIWVAKREQEDDEQAKLELPSSIRHTNEMVWEVESVLPSVHKYPVYSVAWSALTGKIASAGSDGKIVVYSETEKGKWVIDSIHEGAHGVHEINCVIWAQLDDENEILVSAGDDGYVNLWKI.

7 WD repeats span residues 10–49 (AHND…KFPL), 56–108 (THKR…VEYD), 135–175 (GHEN…EEFE), 182–221 (DHSQ…DEWS), 228–275 (GHEG…EDDE), 302–341 (VHKY…KWVI), and 349–383 (HGVH…LWKI).

The protein belongs to the WD repeat CIA1 family. Interacts with NAR1.

It is found in the cytoplasm. Its subcellular location is the nucleus. Essential component of the cytosolic iron-sulfur (Fe/S) protein assembly machinery. Required for the maturation of extramitochondrial Fe/S proteins. The sequence is that of Probable cytosolic iron-sulfur protein assembly protein 1 from Candida albicans (strain SC5314 / ATCC MYA-2876) (Yeast).